Reading from the N-terminus, the 1393-residue chain is DNA-directed RNA polymerase subunit beta'' (1393 aa).

4 residues coordinate Zn(2+): Cys-224, Cys-295, Cys-302, and Cys-305.

The protein belongs to the RNA polymerase beta' chain family. RpoC2 subfamily. In plastids the minimal PEP RNA polymerase catalytic core is composed of four subunits: alpha, beta, beta', and beta''. When a (nuclear-encoded) sigma factor is associated with the core the holoenzyme is formed, which can initiate transcription. Zn(2+) serves as cofactor.

Its subcellular location is the plastid. The protein localises to the chloroplast. It carries out the reaction RNA(n) + a ribonucleoside 5'-triphosphate = RNA(n+1) + diphosphate. DNA-dependent RNA polymerase catalyzes the transcription of DNA into RNA using the four ribonucleoside triphosphates as substrates. This chain is DNA-directed RNA polymerase subunit beta'', found in Manihot esculenta (Cassava).